A 977-amino-acid chain; its full sequence is Mineralocorticoid receptor (977 aa).

Residues 1-19 (METKGYHSRPEGLDMERRW) are compositionally biased toward basic and acidic residues. Disordered regions lie at residues 1-37 (METK…AERT) and 231-288 (QGTP…VSSP). Positions 1-601 (METKGYHSRP…STGSSRPSKI (601 aa)) are modulating. The segment covering 231–243 (QGTPLTCSPTVDN) has biased composition (polar residues). Ser250, Ser259, Ser283, Ser287, and Ser299 each carry phosphoserine. Residues 259–288 (SPLSSPLSSMKSPISSPPSHCSVKSPVSSP) are compositionally biased toward low complexity. Disordered regions lie at residues 305 to 327 (NSRC…SPAA) and 344 to 368 (SGAS…KGAH). Cys602, Cys605, Cys619, Cys622, Cys638, Cys644, Cys654, and Cys657 together coordinate Zn(2+). 2 consecutive NR C4-type zinc fingers follow at residues 602–622 (CLVC…CGSC) and 638–662 (CAGR…LQKC). The nuclear receptor DNA-binding region spans 602–667 (CLVCGDGASG…RLQKCLQAGM (66 aa)). Residues 668 to 718 (NLGARKSKKLGKLKGLHEEQPQQPPPPQSPEEGTTYIAPAKEPSVNTALVP) are hinge. Residues 682-703 (GLHEEQPQQPPPPQSPEEGTTY) are disordered. In terms of domain architecture, NR LBD spans 719 to 957 (QLSSISRALT…EFPAMLVEII (239 aa)). 21-hydroxyprogesterone-binding residues include Asn763 and Gln769. Aldosterone is bound by residues Asn763 and Gln769. Progesterone-binding residues include Asn763 and Gln769. The interval 775 to 778 (KWAK) is important for coactivator binding. Positions 810 and 938 each coordinate 21-hydroxyprogesterone. Aldosterone-binding residues include Arg810 and Thr938. Progesterone contacts are provided by Arg810 and Thr938.

The protein belongs to the nuclear hormone receptor family. NR3 subfamily.

It localises to the cytoplasm. The protein resides in the nucleus. Receptor for both mineralocorticoids (MC) such as aldosterone and glucocorticoids (GC) such as corticosterone or cortisol. Binds to mineralocorticoid response elements (MRE) and transactivates target genes. The effect of MC is to increase ion and water transport and thus raise extracellular fluid volume and blood pressure and lower potassium levels. This chain is Mineralocorticoid receptor (NR3C2), found in Tupaia belangeri (Common tree shrew).